The chain runs to 464 residues: L-cystine uptake protein TcyP (464 aa).

10 helical membrane passes run 3–23, 34–54, 73–93, 107–127, 184–204, 225–245, 263–283, 347–367, 371–391, and 395–415; these read TLLVGINVAVMLILVGVLYYM, VFTALGVGIIFGLILQFIYEP, YVKLLQMIVMPLILVSIISAF, GLIIGILILTTGIAAAVGIAA, PTSTISVVIFAAFIGIAFIGV, IVMRMVTLILRLTPYGVLALM, FVLASYVALIVMFVIHLLLIA, AGIYPAMLAMMVAPTVGIDPL, FILTLIAVVAISSFGVAGVGG, and FAALIVLSTMNLPIGIVALVI.

The protein belongs to the dicarboxylate/amino acid:cation symporter (DAACS) (TC 2.A.23) family.

Its subcellular location is the membrane. Mediates uptake of L-cystine, the oxidized form of L-cysteine. In Bacillus cereus (strain ATCC 10987 / NRS 248), this protein is L-cystine uptake protein TcyP.